The sequence spans 99 residues: MDILFSLFISMAMFTFGIIGILIKRNALIVFMCVELMLNAANLLFVAFAAHWGNETGLIWVFFVLVVAAAEAAVGLAIIINMFRSKQVVDVDQYNLLRG.

Transmembrane regions (helical) follow at residues 3-23 (ILFS…GILI), 28-48 (LIVF…FVAF), and 59-79 (IWVF…LAII).

The protein belongs to the complex I subunit 4L family. NDH-1 is composed of 14 different subunits. Subunits NuoA, H, J, K, L, M, N constitute the membrane sector of the complex.

It localises to the cell inner membrane. The catalysed reaction is a quinone + NADH + 5 H(+)(in) = a quinol + NAD(+) + 4 H(+)(out). Functionally, NDH-1 shuttles electrons from NADH, via FMN and iron-sulfur (Fe-S) centers, to quinones in the respiratory chain. The immediate electron acceptor for the enzyme in this species is believed to be ubiquinone. Couples the redox reaction to proton translocation (for every two electrons transferred, four hydrogen ions are translocated across the cytoplasmic membrane), and thus conserves the redox energy in a proton gradient. This chain is NADH-quinone oxidoreductase subunit K, found in Protochlamydia amoebophila (strain UWE25).